Here is a 320-residue protein sequence, read N- to C-terminus: o-succinylbenzoate synthase (320 aa).

Lys133 (proton donor) is an active-site residue. Residues Asp161, Glu190, and Asp213 each contribute to the Mg(2+) site. Lys235 functions as the Proton acceptor in the catalytic mechanism.

The protein belongs to the mandelate racemase/muconate lactonizing enzyme family. MenC type 1 subfamily. A divalent metal cation serves as cofactor.

The catalysed reaction is (1R,6R)-6-hydroxy-2-succinyl-cyclohexa-2,4-diene-1-carboxylate = 2-succinylbenzoate + H2O. It functions in the pathway quinol/quinone metabolism; 1,4-dihydroxy-2-naphthoate biosynthesis; 1,4-dihydroxy-2-naphthoate from chorismate: step 4/7. Its pathway is quinol/quinone metabolism; menaquinone biosynthesis. Its function is as follows. Converts 2-succinyl-6-hydroxy-2,4-cyclohexadiene-1-carboxylate (SHCHC) to 2-succinylbenzoate (OSB). The polypeptide is o-succinylbenzoate synthase (Shigella flexneri).